Here is a 64-residue protein sequence, read N- to C-terminus: UPF0434 protein Bmul_0750/BMULJ_02510 (64 aa).

The protein belongs to the UPF0434 family.

The sequence is that of UPF0434 protein Bmul_0750/BMULJ_02510 from Burkholderia multivorans (strain ATCC 17616 / 249).